The sequence spans 480 residues: Ribulose bisphosphate carboxylase large chain (480 aa).

A propeptide spanning residues 1-2 (MS) is cleaved from the precursor. Pro3 bears the N-acetylproline mark. Lys14 is modified (N6,N6,N6-trimethyllysine). Positions 123 and 173 each coordinate substrate. Lys175 (proton acceptor) is an active-site residue. A substrate-binding site is contributed by Lys177. Mg(2+) contacts are provided by Lys201, Asp203, and Glu204. N6-carboxylysine is present on Lys201. His294 (proton acceptor) is an active-site residue. 3 residues coordinate substrate: Arg295, His327, and Ser379.

The protein belongs to the RuBisCO large chain family. Type I subfamily. Heterohexadecamer of 8 large chains and 8 small chains; disulfide-linked. The disulfide link is formed within the large subunit homodimers. The cofactor is Mg(2+). The disulfide bond which can form in the large chain dimeric partners within the hexadecamer appears to be associated with oxidative stress and protein turnover.

Its subcellular location is the plastid. It is found in the chloroplast. The enzyme catalyses 2 (2R)-3-phosphoglycerate + 2 H(+) = D-ribulose 1,5-bisphosphate + CO2 + H2O. The catalysed reaction is D-ribulose 1,5-bisphosphate + O2 = 2-phosphoglycolate + (2R)-3-phosphoglycerate + 2 H(+). Its function is as follows. RuBisCO catalyzes two reactions: the carboxylation of D-ribulose 1,5-bisphosphate, the primary event in carbon dioxide fixation, as well as the oxidative fragmentation of the pentose substrate in the photorespiration process. Both reactions occur simultaneously and in competition at the same active site. This chain is Ribulose bisphosphate carboxylase large chain, found in Rivina humilis (Rougeplant).